A 735-amino-acid chain; its full sequence is Diacylglycerol kinase alpha (735 aa).

2 consecutive EF-hand domains span residues 110 to 145 (RPED…MMRV) and 155 to 190 (ELRP…TVPL). The Ca(2+) site is built by Asp123, Asp125, Asn127, Glu134, Asp168, Asp170, Ser172, Ser174, and Glu179. 2 Phorbol-ester/DAG-type zinc fingers span residues 205–253 (QHMW…ALPC) and 269–319 (SHVW…GHEC). In terms of domain architecture, DAGKc spans 372–506 (PNTHPLLVFV…MDRWSVEVIP (135 aa)). At Lys484 the chain carries N6-acetyllysine.

It belongs to the eukaryotic diacylglycerol kinase family. As to quaternary structure, monomer. Expressed in lymphocytes.

Its subcellular location is the cytoplasm. It localises to the cytosol. The catalysed reaction is a 1,2-diacyl-sn-glycerol + ATP = a 1,2-diacyl-sn-glycero-3-phosphate + ADP + H(+). It catalyses the reaction a 1-O-alkyl-sn-glycerol + ATP = a 1-O-alkyl-sn-glycero-3-phosphate + ADP + H(+). The enzyme catalyses 1-O-alkyl-2-acyl-sn-glycerol + ATP = 1-O-alkyl-2-acyl-sn-glycero-3-phosphate + ADP + H(+). It carries out the reaction 1,2-dihexadecanoyl-sn-glycerol + ATP = 1,2-dihexadecanoyl-sn-glycero-3-phosphate + ADP + H(+). The catalysed reaction is 1-hexadecanoyl-2-(9Z-octadecenoyl)-sn-glycerol + ATP = 1-hexadecanoyl-2-(9Z-octadecenoyl)-sn-glycero-3-phosphate + ADP + H(+). It catalyses the reaction 2-(9Z-octadecenoyl)-glycerol + ATP = 2-(9Z-octadecenoyl)-sn-glycero-3-phosphate + ADP + H(+). The enzyme catalyses 1,2-di-(9Z-octadecenoyl)-sn-glycerol + ATP = 1,2-di-(9Z-octadecenoyl)-sn-glycero-3-phosphate + ADP + H(+). It carries out the reaction 1-octadecanoyl-2-(5Z,8Z,11Z,14Z-eicosatetraenoyl)-sn-glycerol + ATP = 1-octadecanoyl-2-(5Z,8Z,11Z,14Z-eicosatetraenoyl)-sn-glycero-3-phosphate + ADP + H(+). The catalysed reaction is 1,2-didecanoyl-sn-glycerol + ATP = 1,2-didecanoyl-sn-glycero-3-phosphate + ADP + H(+). It catalyses the reaction 1-O-hexadecyl-2-acetyl-sn-glycerol + ATP = 1-O-hexadecyl-2-acetyl-sn-glycero-3-phosphate + ADP + H(+). The enzyme catalyses 1-O-hexadecyl-2-(5Z,8Z,11Z,14Z-eicosatetraenoyl)-sn-glycerol + ATP = 1-O-hexadecyl-2-(5Z,8Z,11Z,14Z-eicosatetraenoyl)-sn-glycero-3-phosphate + ADP + H(+). It carries out the reaction 1-O-hexadecyl-2-(9Z-octadecenoyl)-sn-glycerol + ATP = 1-O-hexadecyl-2-(9Z-octadecenoyl)-sn-glycero-3-phosphate + ADP + H(+). The catalysed reaction is 1-O-hexadecyl-sn-glycerol + ATP = 1-O-hexadecyl-sn-glycero-3-phosphate + ADP + H(+). It participates in lipid metabolism; glycerolipid metabolism. Its activity is regulated as follows. Stimulated by calcium and phosphatidylserine. In terms of biological role, diacylglycerol kinase that converts diacylglycerol/DAG into phosphatidic acid/phosphatidate/PA and regulates the respective levels of these two bioactive lipids. Thereby, acts as a central switch between the signaling pathways activated by these second messengers with different cellular targets and opposite effects in numerous biological processes. Also plays an important role in the biosynthesis of complex lipids. Can also phosphorylate 1-alkyl-2-acylglycerol in vitro as efficiently as diacylglycerol provided it contains an arachidonoyl group. Also involved in the production of alkyl-lysophosphatidic acid, another bioactive lipid, through the phosphorylation of 1-alkyl-2-acetyl glycerol. This Homo sapiens (Human) protein is Diacylglycerol kinase alpha (DGKA).